Reading from the N-terminus, the 127-residue chain is S1-like domain-containing protein C146.08c (127 aa).

The S1-like domain maps to 10–86 (SFDPPARLEK…NKIDGTILYV (77 aa)). Positions 107 to 127 (ESLNQNDSEESSSSEEEYDSD) are disordered. Over residues 113–127 (DSEESSSSEEEYDSD) the composition is skewed to acidic residues. A Phosphotyrosine modification is found at tyrosine 124. Serine 126 carries the phosphoserine modification.

Belongs to the EIF1AD family.

It localises to the cytoplasm. The protein localises to the nucleus. In Schizosaccharomyces pombe (strain 972 / ATCC 24843) (Fission yeast), this protein is S1-like domain-containing protein C146.08c.